The primary structure comprises 58 residues: Small ribosomal subunit protein bS21 (58 aa).

A compositionally biased stretch (basic and acidic residues) spans 32-42 (VRKREHYEKPS). Positions 32-58 (VRKREHYEKPSVKKKKKSEAARKRKFK) are disordered. The span at 43 to 58 (VKKKKKSEAARKRKFK) shows a compositional bias: basic residues.

This sequence belongs to the bacterial ribosomal protein bS21 family.

The sequence is that of Small ribosomal subunit protein bS21 from Clostridium botulinum (strain Okra / Type B1).